The following is a 419-amino-acid chain: Histone acetyltransferase type B subunit 2 (419 aa).

WD repeat units follow at residues 131–171, 177–217, 225–265, 267–307, and 311–351; these read PHDG…VEAL, YHTE…KNIK, AHTD…IIHN, NTKK…NPLY, and GHED…AEQT. The interval 353–357 is interaction with the histone H4 N-terminus; it reads DEIED. The stretch at 368–408 is one WD 6 repeat; the sequence is GHKTSINDIAVNPNINWLVASAEEDNIVQIWKCSSNIPRIG.

The protein belongs to the WD repeat RBAP46/RBAP48/MSI1 family. Component of the HAT-B complex composed of at least HAT1 and HAT2. The HAT-B complex binds to histone H4 tail.

It localises to the cytoplasm. The protein resides in the nucleus. Regulatory subunit of the histone acetylase B (HAT-B) complex. The complex acetylates Lys-12 of histone H4 which is required for telomeric silencing. This is Histone acetyltransferase type B subunit 2 (HAT2) from Candida glabrata (strain ATCC 2001 / BCRC 20586 / JCM 3761 / NBRC 0622 / NRRL Y-65 / CBS 138) (Yeast).